The primary structure comprises 692 residues: MGTLQSWRRAYGALKDTTKVGLVRVNSDYAELDVAIVKATNHVECPPKDRHLRKIFLATSAIRPRADVAYCIHALSRRLHKTRNWTVALKALLVIHRLLRDGDPTFREELLNFSQKGRIMQISNFKDDSSPVAWDCSGWVRTYALFLEERLECFRVLKYDIEAERLPKVSPGQEKGYSKTRDLDGEKLLEQLPALQQLLHRLIGCKPEGAAKHNHIIQYALSLVLKESFKVYCAINEGIINLVEKFFEMPRHEAIKALEIYKRAGLQAGNLSAFYEVCKGLELARNFQFPVLREPPQSFLTTMEEYMRDAPQMVDVTSGPLLLTYTPDDGLTSEDVGPSHEEHETSSPSDSAVVPSEETQLSSQSPPSVETPQNFIDTDDLLGLHDDTPDPLAILDQNALALALVSNDVDSSPFSFGQARDLDPSGWELALVTTPSNDISAATERQLAGGLDTLTLNSLYDDGALRAAQQPAYGVPASNPFEVQDLFAFSDSVSPPSAVNNPFGLYEPTYHQQEQQPQLQVAPSPANPFGDFGEFPIVPVSEPQSTTSFGAFPVPVSEPSNTTGFGEIPVVPVTEPPNTTAFGEFPVVPVSEPQNITGFGALPVTPASEPSNTTGFGEFPVVSVSAPQNTTGFGALPVIPVSEPSKTTGLGEFPVVPVSEPQNTTGFGEFPVNAGAHEQHNSNNPFGSTGFL.

Positions 24–161 constitute an ENTH domain; the sequence is RVNSDYAELD…ECFRVLKYDI (138 aa). Positions 325-383 are disordered; sequence YTPDDGLTSEDVGPSHEEHETSSPSDSAVVPSEETQLSSQSPPSVETPQNFIDTDDLLG. Residues 357–376 show a composition bias toward polar residues; the sequence is EETQLSSQSPPSVETPQNFI. The residue at position 363 (S363) is a Phosphoserine. Copy 1 of the repeat occupies 532-548; sequence FGEFPIVPVSEPQSTTS. The segment at 532–666 is 8 X 17 AA approximate tandem repeats; it reads FGEFPIVPVS…PVSEPQNTTG (135 aa). Residues 549–564 form a 2; truncated repeat; sequence FGAFPVPVSEPSNTTG. Tandem repeats lie at residues 565 to 581, 582 to 598, 599 to 615, 616 to 632, 633 to 649, and 650 to 666.

Expressed in the whole plant.

The protein localises to the membrane. Its subcellular location is the clathrin-coated pit. The protein resides in the golgi apparatus. It localises to the cytoplasmic vesicle. It is found in the clathrin-coated vesicle. The sequence is that of Putative clathrin assembly protein At1g14910 from Arabidopsis thaliana (Mouse-ear cress).